A 204-amino-acid chain; its full sequence is Lipid A acyltransferase PagP (204 aa).

The first 25 residues, 1–25 (MSYKHLISACIFSSLCLGQVNAVLA), serve as a signal peptide directing secretion. Catalysis depends on residues histidine 76, aspartate 119, and serine 120.

The protein belongs to the lipid A palmitoyltransferase family. Homodimer.

Its subcellular location is the cell outer membrane. The enzyme catalyses a lipid A + a 1,2-diacyl-sn-glycero-3-phosphocholine = a hepta-acyl lipid A + a 2-acyl-sn-glycero-3-phosphocholine. It carries out the reaction a lipid IVA + a 1,2-diacyl-sn-glycero-3-phosphocholine = a lipid IVB + a 2-acyl-sn-glycero-3-phosphocholine. The catalysed reaction is a lipid IIA + a 1,2-diacyl-sn-glycero-3-phosphocholine = a lipid IIB + a 2-acyl-sn-glycero-3-phosphocholine. Transfers a fatty acid residue from the sn-1 position of a phospholipid to the N-linked hydroxyfatty acid chain on the proximal unit of lipid A or its precursors. The protein is Lipid A acyltransferase PagP of Yersinia enterocolitica serotype O:8 / biotype 1B (strain NCTC 13174 / 8081).